Consider the following 1319-residue polypeptide: MAQSLRLHFAARRSNTYPLSETSGDDLDSHVHMCFKRPTRISTSNVVQMKLTPRQTALAPLIKENVQSQERSSVPSSENVNKKSSCLQISLQPTRYSGYLQSSNVLADSDDASFTCILKDGIYSSAVVDNELNAVNDGHLVSSPAICSGSLSNFSTSDNGSYSSNGSDFGSCASITSGGSYTNSVISDSSSYTFPPSDDTFLGGNLPSDSTSNRSVPNRNTTPCEIFSRSTSTDPFVQDDLEHGLEIMKLPVSRNTKIPLKRYSSLVIFPRSPSTTRPTSPTSLCTLLSKGSYQTSHQFIISPSEIAHNEDGTSAKGFLSTAVNGLRLSKTICTPGEVRDIRPLHRKGSLQKKIVLSNNTPRQTVCEKSSEGYSCVSVHFTQRKAATLDCETTNGDCKPEMSEIKLNSDSEYIKLMHRTSACLPSSQNVDCQININGELERPHSQMNKNHGILRRSISLGGAYPNISCLSSLKHNCSKGGPSQLLIKFASGNEGKVDNLSRDSNRDCTNELSNSCKTRDDFLGQVDVPLYPLPTENPRLERPYTFKDFVLHPRSHKSRVKGYLRLKMTYLPKTSGSEDDNAEQAEELEPGWVVLDQPDAACHLQQQQEPSPLPPGWEERQDILGRTYYVNHESRRTQWKRPTPQDNLTDAENGNIQLQAQRAFTTRRQISEETESVDNRESSENWEIIREDEATMYSNQAFPSPPPSSNLDVPTHLAEELNARLTIFGNSAVSQPASSSNHSSRRGSLQAYTFEEQPTLPVLLPTSSGLPPGWEEKQDERGRSYYVDHNSRTTTWTKPTVQATVETSQLTSSQSSAGPQSQASTSDSGQQVTQPSEIEQGFLPKGWEVRHAPNGRPFFIDHNTKTTTWEDPRLKIPAHLRGKTSLDTSNDLGPLPPGWEERTHTDGRIFYINHNIKRTQWEDPRLENVAITGPAVPYSRDYKRKYEFFRRKLKKQNDIPNKFEMKLRRATVLEDSYRRIMGVKRADFLKARLWIEFDGEKGLDYGGVAREWFFLISKEMFNPYYGLFEYSATDNYTLQINPNSGLCNEDHLSYFKFIGRVAGMAVYHGKLLDGFFIRPFYKMMLHKPITLHDMESVDSEYYNSLRWILENDPTELDLRFIIDEELFGQTHQHELKNGGSEIVVTNKNKKEYIYLVIQWRFVNRIQKQMAAFKEGFFELIPQDLIKIFDENELELLMCGLGDVDVNDWREHTKYKNGYSANHQVIQWFWKAVLMMDSEKRIRLLQFVTGTSRVPMNGFAELYGSNGPQSFTVEQWGTPEKLPRAHTCFNRLDLPPYESFEELWDKLQMAIENTQGFDGVD.

Position 2 is an N-acetylalanine (Ala-2). The segment at 204–229 (GNLPSDSTSNRSVPNRNTTPCEIFSR) is disordered. Positions 207–229 (PSDSTSNRSVPNRNTTPCEIFSR) are enriched in polar residues. Ser-576 carries the post-translational modification Phosphoserine. Residues 578-981 (DDNAEQAEEL…LEDSYRRIMG (404 aa)) are mediates interaction with TNIK. The WW 1 domain occupies 610-643 (SPLPPGWEERQDILGRTYYVNHESRRTQWKRPTP). Position 648 is a phosphothreonine (Thr-648). Residue Ser-670 is modified to Phosphoserine. A Nuclear export signal motif is present at residues 716–726 (LAEELNARLTI). Phosphoserine is present on residues Ser-742 and Ser-747. 2 disordered regions span residues 755–780 (EQPTLPVLLPTSSGLPPGWEEKQDER) and 796–834 (TKPTVQATVETSQLTSSQSSAGPQSQASTSDSGQQVTQP). Residues 767–800 (SGLPPGWEEKQDERGRSYYVDHNSRTTTWTKPTV) form the WW 2 domain. Polar residues predominate over residues 796-809 (TKPTVQATVETSQL). Low complexity predominate over residues 810 to 825 (TSSQSSAGPQSQASTS). WW domains lie at 840 to 873 (GFLPKGWEVRHAPNGRPFFIDHNTKTTTWEDPRL) and 892 to 925 (GPLPPGWEERTHTDGRIFYINHNIKRTQWEDPRL). The HECT domain occupies 984–1318 (RADFLKARLW…IENTQGFDGV (335 aa)). Lys-1279 is covalently cross-linked (Glycyl lysine isopeptide (Lys-Gly) (interchain with G-Cter in ubiquitin)). Catalysis depends on Cys-1286, which acts as the Glycyl thioester intermediate.

In terms of assembly, binds, in vitro, through the WW2 and WW3 domains, to neural isoforms of ENAH that contain the PPSY motif. Interacts with BEAN1, LITAF, RNF11, WBP1, WBP2, PMEPAI and PRRG2. Interacts with NDFIP1 and NDFIP2; this interaction activates the E3 ubiquitin-protein ligase and may induce its recruitment to exosomes. Interacts with UBE2D2. Interaction with PTEN is questionable according to PubMed:18562292. Interacts (via C2 domain) with GRB10 (via SH2 domain). Interacts with ERBB4. Interacts with TNIK; the interaction is direct, allows the TNIK-dependent recruitment of RAP2A and its ubiquitination by NEDD4. Interacts (via WW3 domain) with TNK2; EGF promotes this interaction. Interacts (via WW3 domain) with FGFR1 (via C-terminus). Interacts with OTUD7B. Interacts with ISG15. Interacts (via WW domain) with RAPGEF2; this interaction leads to ubiquitination and degradation via the proteasome pathway. Interacts (via WW domains) with ARRDC3 (via PPXY motifs). Interacts with LAPTM4B; may play a role in the lysosomal sorting of LAPTM4B. Interacts (via WW domains) with ARRDC1, ARRDC2 and ARRDC3. Interacts with ZBTB7B. Interacts with PRRG4 (via cytoplasmic domain). Interacts directly with LDLRAD3; this interaction promotes NEDD4 auto-ubiquitination. Interacts with ADRB2. Interacts (via WW domains) with DAZAP2 (via PPAY motif). Interacts with USP13. (Microbial infection) Interacts with viral proteins that contain a late-budding motif P-P-P-Y. This interaction is essential for viral particle budding of many retroviruses, like HTLV-1 Gag and MLV Gag. Interacts with Herpes simplex virus 2 (HHV-2) protein UL56; this interaction induces NEDD4 degradation. Interacts with Ebola virus protein VP40. Undergoes 'Lys-29'-linked auto-ubiquitination at Lys-1279 and serves as a scaffold for recruiting USP13 to form an NEDD4-USP13 deubiquitination complex.

Its subcellular location is the cytoplasm. The protein localises to the nucleus. It is found in the cell membrane. The catalysed reaction is S-ubiquitinyl-[E2 ubiquitin-conjugating enzyme]-L-cysteine + [acceptor protein]-L-lysine = [E2 ubiquitin-conjugating enzyme]-L-cysteine + N(6)-ubiquitinyl-[acceptor protein]-L-lysine.. Its pathway is protein modification; protein ubiquitination. With respect to regulation, activated by NDFIP1- and NDFIP2-binding. Functionally, E3 ubiquitin-protein ligase which accepts ubiquitin from an E2 ubiquitin-conjugating enzyme in the form of a thioester and then directly transfers the ubiquitin to targeted substrates. Specifically ubiquitinates 'Lys-63' in target proteins. Involved in the pathway leading to the degradation of VEGFR-2/KDFR, independently of its ubiquitin-ligase activity. Monoubiquitinates IGF1R at multiple sites, thus leading to receptor internalization and degradation in lysosomes. Ubiquitinates FGFR1, leading to receptor internalization and degradation in lysosomes. Promotes ubiquitination of RAPGEF2. According to PubMed:18562292 the direct link between NEDD4 and PTEN regulation through polyubiquitination described in PubMed:17218260 is questionable. Involved in ubiquitination of ERBB4 intracellular domain E4ICD. Part of a signaling complex composed of NEDD4, RAP2A and TNIK which regulates neuronal dendrite extension and arborization during development. Ubiquitinates TNK2 and regulates EGF-induced degradation of EGFR and TNF2. Ubiquitinates BRAT1 and this ubiquitination is enhanced in the presence of NDFIP1. Ubiquitinates DAZAP2, leading to its proteasomal degradation. Ubiquitinates POLR2A. Functions as a platform to recruit USP13 to form an NEDD4-USP13 deubiquitination complex that plays a critical role in cleaving the 'Lys-48'-linked ubiquitin chains of VPS34 and then stabilizing VPS34, thus promoting the formation of autophagosomes. Its function is as follows. (Microbial infection) Involved in the ubiquitination of Ebola virus protein VP40 which plays a role in viral budding. The chain is E3 ubiquitin-protein ligase NEDD4 (NEDD4) from Homo sapiens (Human).